Here is a 130-residue protein sequence, read N- to C-terminus: Protein ApaG (130 aa).

The ApaG domain maps to 3-127 (RALTRDIEVT…FSLDSPGLVR (125 aa)).

This Sinorhizobium fredii (strain NBRC 101917 / NGR234) protein is Protein ApaG.